The primary structure comprises 582 residues: Semenogelin-2 (582 aa).

The signal sequence occupies residues 1–23 (MKSIILFVLSLLLILEKQAAVMG). Disordered stretches follow at residues 25-62 (KGGS…SKGS), 131-156 (KGGQ…KGIF), 173-192 (KEQA…GSQS), 272-477 (NLNQ…EQRQ), and 502-554 (VEGK…SGAH). The span at 50-59 (GQKDKQHTES) shows a compositional bias: basic and acidic residues. 2 stretches are compositionally biased toward polar residues: residues 137–151 (HGTQ…NSPS) and 174–192 (EQAS…GSQS). The span at 292-310 (RTEERQLNHGEKSVQKDVS) shows a compositional bias: basic and acidic residues. Positions 325-335 (KSQNQVTIPSQ) are enriched in polar residues. Residues 336–345 (DQEHGHKENK) are compositionally biased toward basic and acidic residues. A compositionally biased stretch (polar residues) spans 385–395 (KSQNQVTIPSQ). Residues 396-405 (DQEHGHKENK) show a composition bias toward basic and acidic residues. Residues 445-455 (KSQNQVTIPSQ) show a composition bias toward polar residues. Basic and acidic residues predominate over residues 456–465 (DQEHGHKENK). 2 stretches are compositionally biased toward polar residues: residues 466–477 (ISYQSSSTEQRQ) and 506–529 (SQIQ…NSGK). Positions 537–546 (LLSHEQEGRY) are enriched in basic and acidic residues.

It belongs to the semenogelin family. As to quaternary structure, interacts with SERPINA5.

It localises to the secreted. In terms of biological role, participates in the formation of a gel matrix (sperm coagulum) entrapping the accessory gland secretions and ejaculated spermatozoa. This is Semenogelin-2 (SEMG2) from Macaca nemestrina (Pig-tailed macaque).